A 746-amino-acid chain; its full sequence is Stromal interaction molecule 2 (746 aa).

The first 14 residues, 1–14 (MLLFGLLVAGVADG), serve as a signal peptide directing secretion. Residues 15-218 (CDLVPRHLRG…RPPHNWMKDF (204 aa)) lie on the Extracellular side of the membrane. Ser28 carries the post-translational modification Phosphoserine. Residues 67–102 (FSLEALQTIHKQMDDDKDGGIEVDESDEFIREDMKY) form the EF-hand domain. 4 residues coordinate Ca(2+): Asp80, Asp82, Asp84, and Glu91. N-linked (GlcNAc...) asparagine glycosylation occurs at Asn135. In terms of domain architecture, SAM spans 136-204 (WTLEDTLQWL…QLKALDVVLF (69 aa)). Residues 219 to 235 (ILTISIVIGVGGCWFAY) traverse the membrane as a helical segment. Residues 236 to 746 (TQNKTSKEHV…IKSLFKKKSK (511 aa)) lie on the Cytoplasmic side of the membrane. The stretch at 247–394 (KMMKDLESLQ…EKIKKKRSTV (148 aa)) forms a coiled coil. Disordered stretches follow at residues 490-562 (PIVP…PDIL) and 592-651 (DTAS…RGSP). Residue Ser523 is modified to Phosphoserine. The segment covering 527 to 539 (QRAQLPAHAPLAA) has biased composition (low complexity). Residues 540–549 (HPRHPHHPQH) show a composition bias toward basic residues. 2 positions are modified to phosphoserine: Ser609 and Ser621. A compositionally biased stretch (basic and acidic residues) spans 625–637 (ISRDELSLEDSSR). A phosphoserine mark is found at Ser640, Ser650, Ser661, Ser665, Ser680, and Ser697. The disordered stretch occupies residues 684–746 (LSSGIPVPHP…IKSLFKKKSK (63 aa)). The segment covering 723–732 (DLCHNGEKSK) has biased composition (basic and acidic residues). The span at 733–746 (KPSKIKSLFKKKSK) shows a compositional bias: basic residues.

Oligomer with STIM1. Interacts with ORAI1. Glycosylated. In terms of processing, phosphorylated predominantly on Ser residues.

It is found in the endoplasmic reticulum membrane. Functionally, plays a role in mediating store-operated Ca(2+) entry (SOCE), a Ca(2+) influx following depletion of intracellular Ca(2+) stores. Functions as a highly sensitive Ca(2+) sensor in the endoplasmic reticulum which activates both store-operated and store-independent Ca(2+)-influx. Regulates basal cytosolic and endoplasmic reticulum Ca(2+) concentrations. Upon mild variations of the endoplasmic reticulum Ca(2+) concentration, translocates from the endoplasmic reticulum to the plasma membrane where it probably activates the Ca(2+) release-activated Ca(2+) (CRAC) channels ORAI1, ORAI2 and ORAI3. May inhibit STIM1-mediated Ca(2+) influx. The protein is Stromal interaction molecule 2 (Stim2) of Mus musculus (Mouse).